We begin with the raw amino-acid sequence, 294 residues long: MSASKQLLKLGLPKGSLQDSTLDLFAKAGFHFSVKSRSYFPSIDDDELEAILIRAQEMAHYVELGAFDVGLTGKDWIIETDADVVEVSDLVYSKASMRPVRWVLAVPESSSIQTVKDLEGKHIATEVVNITKKYLAENNVNAHVEFSWGATEVKPPELADAIVEVTETGSSLRANKLRIVEVLLESNTKLIANRNSWNDPWKREKIENMAMLLQGAIHAQGKVGLKMNAPKDALDKIMAFIPGLRTPTVSNLADDKWVALEVIVDEQTVRSVIPDLKRAGAEGIFEYHINKLID.

It belongs to the ATP phosphoribosyltransferase family. Long subfamily. Requires Mg(2+) as cofactor.

It localises to the cytoplasm. The enzyme catalyses 1-(5-phospho-beta-D-ribosyl)-ATP + diphosphate = 5-phospho-alpha-D-ribose 1-diphosphate + ATP. The protein operates within amino-acid biosynthesis; L-histidine biosynthesis; L-histidine from 5-phospho-alpha-D-ribose 1-diphosphate: step 1/9. Its activity is regulated as follows. Feedback inhibited by histidine. In terms of biological role, catalyzes the condensation of ATP and 5-phosphoribose 1-diphosphate to form N'-(5'-phosphoribosyl)-ATP (PR-ATP). Has a crucial role in the pathway because the rate of histidine biosynthesis seems to be controlled primarily by regulation of HisG enzymatic activity. This chain is ATP phosphoribosyltransferase, found in Prosthecochloris aestuarii (strain DSM 271 / SK 413).